A 252-amino-acid polypeptide reads, in one-letter code: Imidazole glycerol phosphate synthase subunit HisF (252 aa).

Residues Asp11 and Asp130 contribute to the active site.

Belongs to the HisA/HisF family. Heterodimer of HisH and HisF.

The protein localises to the cytoplasm. The enzyme catalyses 5-[(5-phospho-1-deoxy-D-ribulos-1-ylimino)methylamino]-1-(5-phospho-beta-D-ribosyl)imidazole-4-carboxamide + L-glutamine = D-erythro-1-(imidazol-4-yl)glycerol 3-phosphate + 5-amino-1-(5-phospho-beta-D-ribosyl)imidazole-4-carboxamide + L-glutamate + H(+). The protein operates within amino-acid biosynthesis; L-histidine biosynthesis; L-histidine from 5-phospho-alpha-D-ribose 1-diphosphate: step 5/9. Functionally, IGPS catalyzes the conversion of PRFAR and glutamine to IGP, AICAR and glutamate. The HisF subunit catalyzes the cyclization activity that produces IGP and AICAR from PRFAR using the ammonia provided by the HisH subunit. This chain is Imidazole glycerol phosphate synthase subunit HisF, found in Staphylococcus saprophyticus subsp. saprophyticus (strain ATCC 15305 / DSM 20229 / NCIMB 8711 / NCTC 7292 / S-41).